The primary structure comprises 534 residues: GTPase Obg (534 aa).

In terms of domain architecture, Obg spans 2–159; sequence ASFVDRVVLH…SDIVLELKSI (158 aa). The segment at 63–82 is disordered; it reads APHRHASNGGQGMGDWRGGK. The segment covering 71-82 has biased composition (gly residues); the sequence is GGQGMGDWRGGK. The region spanning 160–343 is the OBG-type G domain; the sequence is ADIALVGFPS…LSFAMAELVT (184 aa). Residues 166-173, 191-195, 212-215, 295-298, and 324-326 each bind GTP; these read GFPSAGKS, FTTLI, DVPG, NKID, and SAS. 2 residues coordinate Mg(2+): S173 and T193. Positions 363–449 constitute an OCT domain; the sequence is PRAVNRKEFT…ENAVVFDWEP (87 aa). Positions 456 to 534 are disordered; it reads ELLSGPRGTD…AASTDDGDAL (79 aa). Basic and acidic residues-rich tracts occupy residues 464-504 and 512-526; these read TDPR…ERKA and SARR…REAA.

The protein belongs to the TRAFAC class OBG-HflX-like GTPase superfamily. OBG GTPase family. As to quaternary structure, monomer. The cofactor is Mg(2+).

The protein localises to the cytoplasm. Its function is as follows. An essential GTPase which binds GTP, GDP and possibly (p)ppGpp with moderate affinity, with high nucleotide exchange rates and a fairly low GTP hydrolysis rate. Plays a role in control of the cell cycle, stress response, ribosome biogenesis and in those bacteria that undergo differentiation, in morphogenesis control. This Renibacterium salmoninarum (strain ATCC 33209 / DSM 20767 / JCM 11484 / NBRC 15589 / NCIMB 2235) protein is GTPase Obg.